Reading from the N-terminus, the 414-residue chain is Esterase FrsA (414 aa).

It belongs to the FrsA family.

The enzyme catalyses a carboxylic ester + H2O = an alcohol + a carboxylate + H(+). Its function is as follows. Catalyzes the hydrolysis of esters. The chain is Esterase FrsA from Escherichia coli O81 (strain ED1a).